The sequence spans 623 residues: Prothrombin (623 aa).

Positions 1-24 (MAHVRGLQLPGCLALAALCTLVHS) are cleaved as a signal peptide. A propeptide spanning residues 25-43 (QHVFLAPQQALSLLQRVRR) is cleaved from the precursor. The region spanning 44-90 (ANSVFLEEVRKGNLERECVEETCSYEEAFEALESSTATDVFWAKYTA) is the Gla domain. Residues Glu50, Glu51, Glu58, Glu60, Glu63, Glu64, Glu69, Glu70, Glu73, and Glu76 each carry the 4-carboxyglutamate modification. Cys61 and Cys66 are oxidised to a cystine. 11 disulfide bridges follow: Cys91–Cys104, Cys109–Cys187, Cys130–Cys170, Cys158–Cys182, Cys214–Cys292, Cys235–Cys275, Cys263–Cys287, Cys337–Cys483, Cys392–Cys408, Cys537–Cys551, and Cys565–Cys595. 2 Kringle domains span residues 108–187 (NCAE…IPVC) and 213–292 (QCVP…LNYC). Residues Asn122 and Asn144 are each glycosylated (N-linked (GlcNAc...) asparagine). Positions 365–619 (IVEGSDAEIG…LKKWIQKVID (255 aa)) constitute a Peptidase S1 domain. His407 serves as the catalytic Charge relay system. N-linked (GlcNAc...) asparagine glycosylation occurs at Asn417. Residue Asp463 is the Charge relay system of the active site. A high affinity receptor-binding region which also known as the TP508 peptide region spans residues 552-574 (AGYKPDEGKRGDACEGDSGGPFV). Ser569 functions as the Charge relay system in the catalytic mechanism.

This sequence belongs to the peptidase S1 family. In terms of assembly, heterodimer (named alpha-thrombin) of a light and a heavy chain; disulfide-linked. Forms a heterodimer with SERPINA5. In plasma, interacts (via N-terminus) with alpha-1-microglobulin; this interaction does not prevent the activation of prothrombin to thrombin. Post-translationally, the gamma-carboxyglutamyl residues, which bind calcium ions, result from the carboxylation of glutamyl residues by a microsomal enzyme, the vitamin K-dependent carboxylase. The modified residues are necessary for the calcium-dependent interaction with a negatively charged phospholipid surface, which is essential for the conversion of prothrombin to thrombin. In terms of processing, in the penultimate step of the coagulation cascade, prothrombin is converted to thrombin by the prothrombinase complex composed of factor Xa (F10), cofactor Va (F5), and phospholipids. This activation requires factor Xa-catalyzed sequential cleavage at 2 sites, Arg-315 and Arg-364, along 2 possible pathways. In the first pathway, the first cleavage occurs at Arg-315, leading to the formation of the inactive intermediate prethrombin-2. This pathway preferentially occurs on platelets and in the absence of cofactor Va. In the second pathway, the first cleavage occurs at Arg-364, which separates protease domain into 2 chains that remain connected through a disulfide bond and generates the active intermediate meizothrombin. The presence of cofactor Va directs activation along the meizothrombin pathway and greatly accelerates the rate of cleavage at Arg-364, but has a smaller effect on the cleavage of meizothrombin at Arg-315. Meizothrombin accumulates as an intermediate when prothrombinase is assembled on the membrane of red blood cells.

The catalysed reaction is Selective cleavage of Arg-|-Gly bonds in fibrinogen to form fibrin and release fibrinopeptides A and B.. With respect to regulation, activity is promoted in the presence of negatively charged surfaces, such as polyphosphate and dextran sulfate. Inhibited by SERPINA5. Functionally, thrombin, which cleaves bonds after Arg and Lys, converts fibrinogen to fibrin and activates factors V, VII, VIII, XIII, and, in complex with thrombomodulin, protein C. Functions in blood homeostasis, inflammation and wound healing. Activates coagulation factor XI (F11); activation is promoted by the contact with negatively charged surfaces. Triggers the production of pro-inflammatory cytokines, such as MCP-1/CCL2 and IL8/CXCL8, in endothelial cells. The protein is Prothrombin (F2) of Pongo abelii (Sumatran orangutan).